A 545-amino-acid polypeptide reads, in one-letter code: Chaperonin GroEL 1 (545 aa).

ATP contacts are provided by residues Thr30–Pro33, Lys51, Asp87–Thr91, Gly415, and Asp495.

This sequence belongs to the chaperonin (HSP60) family. In terms of assembly, forms a cylinder of 14 subunits composed of two heptameric rings stacked back-to-back. Interacts with the co-chaperonin GroES.

The protein resides in the cytoplasm. It catalyses the reaction ATP + H2O + a folded polypeptide = ADP + phosphate + an unfolded polypeptide.. In terms of biological role, together with its co-chaperonin GroES, plays an essential role in assisting protein folding. The GroEL-GroES system forms a nano-cage that allows encapsulation of the non-native substrate proteins and provides a physical environment optimized to promote and accelerate protein folding. In Sinorhizobium medicae (strain WSM419) (Ensifer medicae), this protein is Chaperonin GroEL 1.